Here is a 556-residue protein sequence, read N- to C-terminus: Sesquiterpene synthase 2 (556 aa).

Residues D309, D313, D453, and E461 each coordinate Mg(2+). A DDXXD motif motif is present at residues 309 to 313; that stretch reads DDIYD.

It belongs to the terpene synthase family. Tpsa subfamily. It depends on Mg(2+) as a cofactor. Mn(2+) serves as cofactor. As to expression, mostly expressed in roots and mature leaflets and, to a lower extent, in rachis and developing leaflets.

It catalyses the reaction (2E,6E)-farnesyl diphosphate = alpha-humulene + diphosphate. The catalysed reaction is (2E,6E)-farnesyl diphosphate = alpha-selinene + diphosphate. The enzyme catalyses (2E,6E)-farnesyl diphosphate = delta-cadinene + diphosphate. It carries out the reaction (2E,6E)-farnesyl diphosphate = (1S,2S,4R)-beta-elemene + diphosphate. Its pathway is secondary metabolite biosynthesis; terpenoid biosynthesis. Functionally, sesquiterpene synthase involved in the biosynthesis of volatile compounds known for their medicinal efficacy for treating enteritis, dysentery, itch and some cancers. Mediates the conversion of (2E,6E)-farnesyl diphosphate (FPP) into beta-elemene, alpha-humulene, delta-cadinene and alpha-selinene. The protein is Sesquiterpene synthase 2 of Toona sinensis (Chinese mahogany).